The chain runs to 389 residues: Diaminopimelate decarboxylase (389 aa).

Residue Lys-58 is modified to N6-(pyridoxal phosphate)lysine. Residues Gly-233 and 271-274 each bind pyridoxal 5'-phosphate; that span reads ELGR. 5 residues coordinate substrate: Arg-274, Arg-310, Tyr-314, Glu-342, and Tyr-370. Residue Tyr-370 coordinates pyridoxal 5'-phosphate.

Belongs to the Orn/Lys/Arg decarboxylase class-II family. LysA subfamily. Homodimer. Pyridoxal 5'-phosphate is required as a cofactor.

It carries out the reaction meso-2,6-diaminopimelate + H(+) = L-lysine + CO2. It functions in the pathway amino-acid biosynthesis; L-lysine biosynthesis via DAP pathway; L-lysine from DL-2,6-diaminopimelate: step 1/1. Specifically catalyzes the decarboxylation of meso-diaminopimelate (meso-DAP) to L-lysine. In Francisella tularensis subsp. holarctica (strain LVS), this protein is Diaminopimelate decarboxylase.